A 220-amino-acid polypeptide reads, in one-letter code: Ribosomal RNA small subunit methyltransferase Nep1 (220 aa).

Residues Gly178, Gly183, and 196–201 (LYREPL) each bind S-adenosyl-L-methionine.

Belongs to the class IV-like SAM-binding methyltransferase superfamily. RNA methyltransferase NEP1 family. Homodimer.

The enzyme catalyses a pseudouridine in rRNA + S-adenosyl-L-methionine = an N(1)-methylpseudouridine in rRNA + S-adenosyl-L-homocysteine + H(+). Functionally, methyltransferase involved in ribosomal biogenesis. Specifically catalyzes the N1-methylation of the pseudouridine corresponding to position 914 in M.jannaschii 16S rRNA. In Thermococcus kodakarensis (strain ATCC BAA-918 / JCM 12380 / KOD1) (Pyrococcus kodakaraensis (strain KOD1)), this protein is Ribosomal RNA small subunit methyltransferase Nep1.